Consider the following 609-residue polypeptide: Pogo transposable element with KRAB domain (609 aa).

2 disordered regions span residues 1–28 and 100–127; these read MESTAYPLNLSLKEEEEEEEIQSRELED and EGEEESQNSDEWQLQGGTSAENEESDVK. The stretch at 8–28 forms a coiled coil; the sequence is LNLSLKEEEEEEEIQSRELED. Lysine 13 participates in a covalent cross-link: Glycyl lysine isopeptide (Lys-Gly) (interchain with G-Cter in SUMO2). Residues 47 to 118 enclose the KRAB domain; sequence ALFDEVAIYF…DEWQLQGGTS (72 aa). Positions 108–119 are enriched in polar residues; the sequence is SDEWQLQGGTSA. One can recognise an HTH CENPB-type domain in the interval 250-323; that stretch reads AFRGPKNGRF…MRRYDLSLRH (74 aa). The 215-residue stretch at 353-567 folds into the DDE-1 domain; the sequence is HDYEVAQMGN…ISSESIVQGF (215 aa). Residue lysine 384 forms a Glycyl lysine isopeptide (Lys-Gly) (interchain with G-Cter in SUMO2) linkage. Residues 588–609 form a disordered region; the sequence is SELPGGGEPPKDCDTESMAESN.

It localises to the nucleus. The polypeptide is Pogo transposable element with KRAB domain (POGK) (Homo sapiens (Human)).